We begin with the raw amino-acid sequence, 147 residues long: Large ribosomal subunit protein bL9 (147 aa).

Belongs to the bacterial ribosomal protein bL9 family.

Its function is as follows. Binds to the 23S rRNA. The sequence is that of Large ribosomal subunit protein bL9 from Clostridium acetobutylicum (strain ATCC 824 / DSM 792 / JCM 1419 / IAM 19013 / LMG 5710 / NBRC 13948 / NRRL B-527 / VKM B-1787 / 2291 / W).